The sequence spans 345 residues: UDP-3-O-acylglucosamine N-acyltransferase (345 aa).

His252 functions as the Proton acceptor in the catalytic mechanism.

This sequence belongs to the transferase hexapeptide repeat family. LpxD subfamily. In terms of assembly, homotrimer.

The enzyme catalyses a UDP-3-O-[(3R)-3-hydroxyacyl]-alpha-D-glucosamine + a (3R)-hydroxyacyl-[ACP] = a UDP-2-N,3-O-bis[(3R)-3-hydroxyacyl]-alpha-D-glucosamine + holo-[ACP] + H(+). It functions in the pathway bacterial outer membrane biogenesis; LPS lipid A biosynthesis. Catalyzes the N-acylation of UDP-3-O-acylglucosamine using 3-hydroxyacyl-ACP as the acyl donor. Is involved in the biosynthesis of lipid A, a phosphorylated glycolipid that anchors the lipopolysaccharide to the outer membrane of the cell. In Rickettsia rickettsii, this protein is UDP-3-O-acylglucosamine N-acyltransferase.